We begin with the raw amino-acid sequence, 446 residues long: Probable D-serine dehydratase (446 aa).

An N6-(pyridoxal phosphate)lysine modification is found at lysine 113.

It belongs to the serine/threonine dehydratase family. DsdA subfamily. Requires pyridoxal 5'-phosphate as cofactor.

The enzyme catalyses D-serine = pyruvate + NH4(+). This is Probable D-serine dehydratase from Burkholderia lata (strain ATCC 17760 / DSM 23089 / LMG 22485 / NCIMB 9086 / R18194 / 383).